The primary structure comprises 263 residues: Outer membrane protein OmpK (263 aa).

The N-terminal stretch at methionine 1–alanine 20 is a signal peptide.

The protein belongs to the nucleoside-specific channel-forming outer membrane porin (Tsx) (TC 1.B.10) family.

It is found in the cell outer membrane. Functionally, serves as receptor for a broad-host-range vibriophage, KVP40. The chain is Outer membrane protein OmpK from Vibrio parahaemolyticus.